We begin with the raw amino-acid sequence, 247 residues long: MVKFVFPDAREWKYIIESLATIVDEANFVASPEGLKLRALDPGRIAMVDLFIPSNLFEEYSVDQETKISAVLDDIDKVLKRAKSDDKISFEVSQGRLIITLSGRAERRFKFPLIDIAGQELPSPKLNFTVAAKMLSDTFRDALKDASLVSESVKLKAEDESLWLLARSDKGEIESRFSIETGSLVEIDVKEAAEASYGIDFLDKIVSKAYRISDILGLRFATNMPLEMTFDIAGGGTLKYLLAPRME.

This sequence belongs to the PCNA family. As to quaternary structure, homotrimer. The subunits circularize to form a toroid; DNA passes through its center. Replication factor C (RFC) is required to load the toroid on the DNA.

Functionally, sliding clamp subunit that acts as a moving platform for DNA processing. Responsible for tethering the catalytic subunit of DNA polymerase and other proteins to DNA during high-speed replication. The protein is DNA polymerase sliding clamp of Thermofilum pendens (strain DSM 2475 / Hrk 5).